The sequence spans 265 residues: uncharacterized protein (265 aa).

A signal peptide spans 1 to 23; that stretch reads MNYFRILYCSVLLFFSFFSCTSA. Positions 67–248 constitute a NodB homology domain; it reads KEIYLTFDNG…TLKQQGYTFK (182 aa).

This sequence belongs to the polysaccharide deacetylase family.

This is an uncharacterized protein from Geobacillus stearothermophilus (Bacillus stearothermophilus).